The following is a 134-amino-acid chain: Insulin-like peptide 4 (134 aa).

Positions 1 to 26 (MSLIRLGLALLLLLATVSQLLQPVQG) are cleaved as a signal peptide. 3 disulfides stabilise this stretch: Cys31–Cys120, Cys43–Cys133, and Cys119–Cys124. Residues 54-108 (SSASKDARVRDLIRKLQQPDEDIEQETETGRLKQKHTDADTEKGVPPAVGSGRKL) constitute a propeptide, connecting peptide. A disordered region spans residues 72–107 (PDEDIEQETETGRLKQKHTDADTEKGVPPAVGSGRK). Basic and acidic residues predominate over residues 81 to 96 (ETGRLKQKHTDADTEK).

It belongs to the insulin family. Heterodimer of a B chain and an A chain linked by two disulfide bonds. As to expression, expressed at a high level in the embryonic mesoderm, with expression continuing after gastrulation and reducing from stage 12 onwards. Highly expressed in the embryonic anterior midgut rudiment and larval midgut.

Its subcellular location is the secreted. Its function is as follows. Possible ligand of InR/insulin-like receptor. This chain is Insulin-like peptide 4, found in Drosophila melanogaster (Fruit fly).